The chain runs to 602 residues: Adenylosuccinate synthetase (602 aa).

Residues 74–80 and 104–106 contribute to the GTP site; these read GDEGKGK and GHT. D75 acts as the Proton acceptor in catalysis. Mg(2+) contacts are provided by D75 and G104. IMP-binding positions include 75 to 78, 102 to 105, T189, K203, Q315, T331, and K459; these read DEGK and NAGH. Catalysis depends on H105, which acts as the Proton donor. 455-461 provides a ligand contact to substrate; it reads AVTKKPR. Residues R461 and 589 to 591 contribute to the GTP site; that span reads GNG.

Belongs to the adenylosuccinate synthetase family. Homodimer. It depends on Mg(2+) as a cofactor.

It is found in the cytoplasm. The catalysed reaction is IMP + L-aspartate + GTP = N(6)-(1,2-dicarboxyethyl)-AMP + GDP + phosphate + 2 H(+). Its pathway is purine metabolism; AMP biosynthesis via de novo pathway; AMP from IMP: step 1/2. Its function is as follows. Plays an important role in the salvage pathway for purine nucleotide biosynthesis. Catalyzes the first committed step in the biosynthesis of AMP from IMP. The chain is Adenylosuccinate synthetase from Trypanosoma brucei gambiense (strain MHOM/CI/86/DAL972).